We begin with the raw amino-acid sequence, 224 residues long: Octanoyltransferase (224 aa).

Positions 38-213 (AETTDEVWLL…QFVRAAGFQS (176 aa)) constitute a BPL/LPL catalytic domain. Residues 77–84 (RGGQVTYH), 144–146 (SLG), and 157–159 (GLA) contribute to the substrate site. C175 (acyl-thioester intermediate) is an active-site residue.

This sequence belongs to the LipB family.

The protein localises to the cytoplasm. The enzyme catalyses octanoyl-[ACP] + L-lysyl-[protein] = N(6)-octanoyl-L-lysyl-[protein] + holo-[ACP] + H(+). It functions in the pathway protein modification; protein lipoylation via endogenous pathway; protein N(6)-(lipoyl)lysine from octanoyl-[acyl-carrier-protein]: step 1/2. Its function is as follows. Catalyzes the transfer of endogenously produced octanoic acid from octanoyl-acyl-carrier-protein onto the lipoyl domains of lipoate-dependent enzymes. Lipoyl-ACP can also act as a substrate although octanoyl-ACP is likely to be the physiological substrate. This is Octanoyltransferase from Hahella chejuensis (strain KCTC 2396).